The following is a 592-amino-acid chain: Inactive heparanase-2 (592 aa).

A signal peptide spans 1–41 (MRVLCAFPEAMPSSNSRPPACLAPGALYLALLLHLSLSSQA). Residues Asn254 and Asn392 are each glycosylated (N-linked (GlcNAc...) asparagine).

Belongs to the glycosyl hydrolase 79 family. As to quaternary structure, interacts with HPSE. Interacts with SDC1 (via glycan chains). In terms of tissue distribution, widely expressed, with the highest expression in brain, mammary gland, prostate, small intestine, testis and uterus. In the central nervous system, expressed in the spinal cord, caudate nucleus, thalamus, substantia nigra, medulla oblongata, putamen and pons. In the urinary bladder, expressed in longitudinal and circular layers of detrusor muscle. Found both in normal and cancer tissues.

It is found in the secreted. Its subcellular location is the extracellular space. It localises to the extracellular matrix. Functionally, binds heparin and heparan sulfate with high affinity, but lacks heparanase activity. Inhibits HPSE, possibly by competing for its substrates (in vitro). This Homo sapiens (Human) protein is Inactive heparanase-2 (HPSE2).